Here is an 82-residue protein sequence, read N- to C-terminus: Small ribosomal subunit protein bS16 (82 aa).

This sequence belongs to the bacterial ribosomal protein bS16 family.

This Photorhabdus laumondii subsp. laumondii (strain DSM 15139 / CIP 105565 / TT01) (Photorhabdus luminescens subsp. laumondii) protein is Small ribosomal subunit protein bS16.